We begin with the raw amino-acid sequence, 261 residues long: MTDPFTSDGAKMPPKPFTIEEGRRQVRSFVLRQGRFTPAQQRAFDELWPRFGLDYTGAPRDLDAVFGRPAPKVLEIGFGNGAALRFAAQHDPARDYIGIEVHAPGVGRLLNALDDDGATHVRLYHHDAVEVLEREIADGALDEVRIYFPDPWHKKRHNKRRLVQPAFAQLLVRKLRDGGRLHAATDWADYAEQMWDVLDATEGLVNRAGPRGHVARPAWRPQTHFETRGQKLGHGVWDLLYDRESGMENRESPGQAPAAPG.

Glu-75, Glu-100, Asp-127, and Asp-150 together coordinate S-adenosyl-L-methionine. Asp-150 is a catalytic residue. Position 154 (Lys-154) interacts with substrate. An interaction with RNA region spans residues 156-161 (RHNKRR). Substrate is bound by residues Asp-186 and 223 to 226 (THFE).

It belongs to the class I-like SAM-binding methyltransferase superfamily. TrmB family.

It catalyses the reaction guanosine(46) in tRNA + S-adenosyl-L-methionine = N(7)-methylguanosine(46) in tRNA + S-adenosyl-L-homocysteine. It participates in tRNA modification; N(7)-methylguanine-tRNA biosynthesis. In terms of biological role, catalyzes the formation of N(7)-methylguanine at position 46 (m7G46) in tRNA. The protein is tRNA (guanine-N(7)-)-methyltransferase of Xanthomonas campestris pv. campestris (strain 8004).